Reading from the N-terminus, the 651-residue chain is MNSPTVYPVPSQISAHAHIDEQTYQRMYQASIDNPERFWGEQGKRIDWITPYSQTQVKKTSFDANNLSIQWFADGTLNASSNCLDRHLERNGDKIAILWEGDDAKEQRQLSYRELHTQVCQFANVLKAQGVVKGDIVTLYMPMVPEAAVAMLACARIGAVHSVIFGGFSPDSIASRVIDGKSKVIITADEGIRAGRTIPLKHNVDEALARPSVTCVNNVIVLKRTGANVDWQQGRDLDWDELMAGVSSDCPAEEMNAEDPLFLLYTSGSTGNPKGVLHTTGGYLVYAAMTHEYVFDYKENEVYWCTADVGWITGHSYMVYGPFANGATVLMHEGVPNYPTPARLGEIVDRHKVNILYTAPTLIRALMAEGKEHFNGFSGESLRIMGSVGEPINPEAWRWYHEVIGHEHCPIVDTWWQTETGGILISPLPGAIATKPGSATRPFFGVKPAIVDSTGQILEGAVEGNLVMLDSWPGQMRTVYGDHARFALTYFSTFKGMYFTGDGARRDEDGYYWITGRVDDVINVSGHRLGTAEVESALVAHEQVAEAAVVGYPHDIKGQGIYAYVTLVHDAEPSEALRQELRQWVRKEIGALATPDLIQWATGLPKTRSGKIMRRFLRKIAANEVTNLGDSSTLADPSVIDTLIASRLNQR.

CoA-binding positions include 193-196 (RAGR), Thr313, and Asn337. ATP contacts are provided by residues 389 to 391 (GEP), 413 to 418 (DTWWQT), Asp502, and Arg517. A CoA-binding site is contributed by Ser525. An ATP-binding site is contributed by Arg528. Mg(2+)-binding residues include Val539, His541, and Val544. Arg586 is a binding site for CoA. N6-acetyllysine is present on Lys611.

This sequence belongs to the ATP-dependent AMP-binding enzyme family. Mg(2+) is required as a cofactor. Acetylated. Deacetylation by the SIR2-homolog deacetylase activates the enzyme.

It catalyses the reaction acetate + ATP + CoA = acetyl-CoA + AMP + diphosphate. Functionally, catalyzes the conversion of acetate into acetyl-CoA (AcCoA), an essential intermediate at the junction of anabolic and catabolic pathways. AcsA undergoes a two-step reaction. In the first half reaction, AcsA combines acetate with ATP to form acetyl-adenylate (AcAMP) intermediate. In the second half reaction, it can then transfer the acetyl group from AcAMP to the sulfhydryl group of CoA, forming the product AcCoA. The protein is Acetyl-coenzyme A synthetase of Shewanella denitrificans (strain OS217 / ATCC BAA-1090 / DSM 15013).